We begin with the raw amino-acid sequence, 106 residues long: Urease subunit beta (106 aa).

The protein belongs to the urease beta subunit family. Heterotrimer of UreA (gamma), UreB (beta) and UreC (alpha) subunits. Three heterotrimers associate to form the active enzyme.

It localises to the cytoplasm. It catalyses the reaction urea + 2 H2O + H(+) = hydrogencarbonate + 2 NH4(+). Its pathway is nitrogen metabolism; urea degradation; CO(2) and NH(3) from urea (urease route): step 1/1. The sequence is that of Urease subunit beta from Synechococcus sp. (strain CC9902).